Here is a 499-residue protein sequence, read N- to C-terminus: Anaerobic nitric oxide reductase flavorubredoxin (499 aa).

The segment at 30–210 (TKGTSYNSYL…PFSALVTAKI (181 aa)) is zinc metallo-hydrolase. Fe cation-binding residues include histidine 79, glutamate 81, aspartate 83, histidine 147, aspartate 166, and histidine 227. The 140-residue stretch at 254 to 393 (ITLFYDSMSN…LCREHGQFIA (140 aa)) folds into the Flavodoxin-like domain. FMN contacts are provided by residues 260–264 (SMSNN) and 342–369 (AFGSYGWNGGAVDRIHSRLTDAGFETAV). One can recognise a Rubredoxin-like domain in the interval 447–498 (KQCMLCTVCNWVYDPEIGEPNQGVEPNTAWIDVPDYFLCPECNLGKDVFVEV). 4 residues coordinate Fe cation: cysteine 452, cysteine 455, cysteine 485, and cysteine 488.

This sequence in the N-terminal section; belongs to the zinc metallo-hydrolase group 3 family. Homotetramer. The cofactor is Fe cation. Requires FMN as cofactor.

The protein localises to the cytoplasm. Its pathway is nitrogen metabolism; nitric oxide reduction. In terms of biological role, anaerobic nitric oxide reductase; uses NADH to detoxify nitric oxide (NO), protecting several 4Fe-4S NO-sensitive enzymes. Has at least 2 reductase partners, only one of which (NorW, flavorubredoxin reductase) has been identified. NO probably binds to the di-iron center; electrons enter from the NorW at rubredoxin and are transferred sequentially to the FMN center and the di-iron center. Also able to function as an aerobic oxygen reductase. In Aliivibrio salmonicida (strain LFI1238) (Vibrio salmonicida (strain LFI1238)), this protein is Anaerobic nitric oxide reductase flavorubredoxin.